Consider the following 146-residue polypeptide: MRQLAKDINAFLNEVILQAENQHEILIGHCTSEVALTNTQEHILMLLSEESLTNSELARRLNVSQAAVTKAIKSLVKEGMLETSKDSKDARVIFYQLTDLARPIAEEHHHHHEHTLLTYEQVATQFTPNEQKVIQRFLTALVGEIK.

An HTH marR-type domain is found at 1–143 (MRQLAKDINA…IQRFLTALVG (143 aa)). 4 residues coordinate Zn(2+): Glu-24, Cys-30, Glu-41, and His-42. The H-T-H motif DNA-binding region spans 54–77 (NSELARRLNVSQAAVTKAIKSLVK). 3 residues coordinate Zn(2+): Glu-107, His-108, and His-112.

Homodimer.

With respect to regulation, zinc acts as a coregulator and is required for DNA-binding activity. In terms of biological role, zinc-responsive regulator that acts both as a repressor and as an activator by regulating directly the promoters of its target genes. In the presence of zinc, directly represses the expression of the adcRCBA operon, of genes coding for a group of surface antigen zinc-binding pneumococcal histidine triad proteins (PhtA, PhtB, PhtD and PhtE), and of adcAII. Can also activate expression of adh. This is Transcriptional regulator AdcR (adcR) from Streptococcus pneumoniae serotype 2 (strain D39 / NCTC 7466).